Here is a 218-residue protein sequence, read N- to C-terminus: Glutathione S-transferase Mu 4 (218 aa).

Positions 1 to 88 (MPMTLGYWDI…YIARKHNLCG (88 aa)) constitute a GST N-terminal domain. Glutathione is bound by residues 7–8 (YW), 46–50 (WLSEK), 59–60 (NL), and 72–73 (QS). Positions 90 to 208 (TEEEKIRVDI…KTSRFLRTPL (119 aa)) constitute a GST C-terminal domain. Tyr116 is a binding site for substrate.

Belongs to the GST superfamily. Mu family. As to quaternary structure, homodimer.

It localises to the cytoplasm. The enzyme catalyses RX + glutathione = an S-substituted glutathione + a halide anion + H(+). It carries out the reaction 1-chloro-2,4-dinitrobenzene + glutathione = 2,4-dinitrophenyl-S-glutathione + chloride + H(+). It catalyses the reaction (13S,14S)-epoxy-(4Z,7Z,9E,11E,16Z,19Z)-docosahexaenoate + glutathione = (13R)-S-glutathionyl-(14S)-hydroxy-(4Z,7Z,9E,11E,16Z,19Z)-docosahexaenoate. The catalysed reaction is leukotriene C4 = leukotriene A4 + glutathione. Functionally, conjugation of reduced glutathione to a wide number of exogenous and endogenous hydrophobic electrophiles. Catalyzes the conjugation of leukotriene A4 with reduced glutathione (GSH) to form leukotriene C4. Can also catalyze the transfer of a glutathionyl group from glutathione (GSH) to 13(S),14(S)-epoxy-docosahexaenoic acid to form maresin conjugate in tissue regeneration 1 (MCTR1), a bioactive lipid mediator that possess potent anti-inflammatory and proresolving actions. The protein is Glutathione S-transferase Mu 4 (Gstm4) of Rattus norvegicus (Rat).